A 172-amino-acid chain; its full sequence is C-phycocyanin beta subunit (172 aa).

Asparagine 72 carries the post-translational modification N4-methylasparagine. Residues cysteine 82 and cysteine 153 each contribute to the (2R,3E)-phycocyanobilin site.

The protein belongs to the phycobiliprotein family. Heterodimer of an alpha and a beta subunit, which further assembles into trimers and the trimers into hexamers. Contains two covalently linked bilin chromophores.

It localises to the cellular thylakoid membrane. Light-harvesting photosynthetic bile pigment-protein from the phycobiliprotein complex (phycobilisome, PBS). Phycocyanin is the major phycobiliprotein in the PBS rod. The polypeptide is C-phycocyanin beta subunit (cpcB) (Synechocystis sp. (strain PCC 6701)).